A 489-amino-acid chain; its full sequence is Long chain base biosynthesis protein 2a (489 aa).

Residues 2–22 (ITIPYLTAVSTYFSYGLLFAF) traverse the membrane as a helical segment. Lysine 311 bears the N6-(pyridoxal phosphate)lysine mark.

This sequence belongs to the class-II pyridoxal-phosphate-dependent aminotransferase family. As to quaternary structure, heterodimer with LCB1. Component of the serine palmitoyltransferase (SPT) complex, composed of LCB1 and LCB2 (LCB2a or LCB2b). Pyridoxal 5'-phosphate serves as cofactor. In terms of tissue distribution, ubiquitous. Detected in leaves, roots, stems, flowers and at a lower level in mature seeds.

The protein localises to the endoplasmic reticulum membrane. It catalyses the reaction L-serine + hexadecanoyl-CoA + H(+) = 3-oxosphinganine + CO2 + CoA. It functions in the pathway lipid metabolism; sphingolipid metabolism. Functionally, serine palmitoyltransferase (SPT). The heterodimer formed with LCB1 constitutes the catalytic core. Involved in the regulation of the programmed cell death (PCD) signaling pathway. Plays an important role during male gametogenesis and embryogenesis. This Arabidopsis thaliana (Mouse-ear cress) protein is Long chain base biosynthesis protein 2a (LCB2a).